Consider the following 82-residue polypeptide: U-actitoxin-Oulsp2 (82 aa).

Positions 1 to 21 (MNTKLVVVFLLSAILFVSVTA) are cleaved as a signal peptide. A propeptide spanning residues 22–46 (SRPGKDLERDEAYETYDDERPYFKR) is cleaved from the precursor. A ShKT domain is found at 48–82 (CKDNLPAATCSNVKANNNCSSEKYKTNCAKTCGEC). 3 disulfides stabilise this stretch: cysteine 48/cysteine 82, cysteine 57/cysteine 75, and cysteine 66/cysteine 79. The theoritically crucial for binding to potassium channels stretch occupies residues 70-71 (KY).

Belongs to the sea anemone type 1 potassium channel toxin family. Type 1b subfamily.

Its subcellular location is the secreted. It is found in the nematocyst. Its function is as follows. Probable toxin with unknown function. In contrast to similar toxins, this toxin does not inhibit voltage-gated potassium channels (tested at 100 nM). Does not show antimicrobial activities against bacteria and yeasts. In Oulactis sp. (Sea anemone), this protein is U-actitoxin-Oulsp2.